The sequence spans 447 residues: MREIVHLQTGQCGNQIGAAFWQNISGEHGLDSNGVYNGTSELQLERMSVYFNEASGNKYVPRAVLVDLEPGTMDAVRAGPFGQLFRPDNFVFGQSGAGNNWAKGHYTEGAELVDQVLDVVRREAEGCDCLQGFQITHSLGGGTGAGMGTLLISKIREEFPDRMMATFSVVPSPKVSDTVVEPYNATLSVHQLVENSDETFCIDNEALYDICMRTLKLSNPSYGDLNHLVSAVMSGVTTCLRFPGQLNSDLRKLAVNMVPFPRLHFFMVGFAPLTSRGAHSFRAVSVPELTQQMFDPKNMMAASDFRNGRYLTCSAIFRGKVAMKDVEDQMRNVLNKNSSYFVEWIPNNVQTALCSIPPRGLKMSFTFVGNSTAIQELFKRVGEQFTAMFRRKAFLHWYTGEGMDEMEFTEAESNMNDLVSEYQQYQDAGVDEEEEEYEDDAPLEEEV.

Residues glutamine 11, glutamate 69, serine 138, glycine 142, threonine 143, glycine 144, asparagine 204, and asparagine 226 each coordinate GTP. Residue glutamate 69 coordinates Mg(2+). The tract at residues 426–447 is disordered; it reads QDAGVDEEEEEYEDDAPLEEEV. A compositionally biased stretch (acidic residues) spans 429-447; sequence GVDEEEEEYEDDAPLEEEV.

This sequence belongs to the tubulin family. As to quaternary structure, dimer of alpha and beta chains. A typical microtubule is a hollow water-filled tube with an outer diameter of 25 nm and an inner diameter of 15 nM. Alpha-beta heterodimers associate head-to-tail to form protofilaments running lengthwise along the microtubule wall with the beta-tubulin subunit facing the microtubule plus end conferring a structural polarity. Microtubules usually have 13 protofilaments but different protofilament numbers can be found in some organisms and specialized cells. Mg(2+) is required as a cofactor.

The protein localises to the cytoplasm. It localises to the cytoskeleton. Its function is as follows. Tubulin is the major constituent of microtubules, a cylinder consisting of laterally associated linear protofilaments composed of alpha- and beta-tubulin heterodimers. Microtubules grow by the addition of GTP-tubulin dimers to the microtubule end, where a stabilizing cap forms. Below the cap, tubulin dimers are in GDP-bound state, owing to GTPase activity of alpha-tubulin. In Colletotrichum graminicola (Maize anthracnose fungus), this protein is Tubulin beta-2 chain (TUB2).